The primary structure comprises 58 residues: Large ribosomal subunit protein bL32 (58 aa).

Residues 1–19 (MAVPKRKTSKSNTKMRRAA) show a composition bias toward basic residues. Positions 1–22 (MAVPKRKTSKSNTKMRRAANSK) are disordered.

This sequence belongs to the bacterial ribosomal protein bL32 family.

The chain is Large ribosomal subunit protein bL32 from Clostridioides difficile (strain 630) (Peptoclostridium difficile).